Here is a 278-residue protein sequence, read N- to C-terminus: Urease accessory protein UreD 1 (278 aa).

The protein belongs to the UreD family. In terms of assembly, ureD, UreF and UreG form a complex that acts as a GTP-hydrolysis-dependent molecular chaperone, activating the urease apoprotein by helping to assemble the nickel containing metallocenter of UreC. The UreE protein probably delivers the nickel.

It is found in the cytoplasm. In terms of biological role, required for maturation of urease via the functional incorporation of the urease nickel metallocenter. This Bradyrhizobium sp. (strain ORS 278) protein is Urease accessory protein UreD 1.